Consider the following 179-residue polypeptide: ATP synthase subunit delta (179 aa).

The protein belongs to the ATPase delta chain family. In terms of assembly, F-type ATPases have 2 components, F(1) - the catalytic core - and F(0) - the membrane proton channel. F(1) has five subunits: alpha(3), beta(3), gamma(1), delta(1), epsilon(1). F(0) has three main subunits: a(1), b(2) and c(10-14). The alpha and beta chains form an alternating ring which encloses part of the gamma chain. F(1) is attached to F(0) by a central stalk formed by the gamma and epsilon chains, while a peripheral stalk is formed by the delta and b chains.

It localises to the cell inner membrane. Functionally, f(1)F(0) ATP synthase produces ATP from ADP in the presence of a proton or sodium gradient. F-type ATPases consist of two structural domains, F(1) containing the extramembraneous catalytic core and F(0) containing the membrane proton channel, linked together by a central stalk and a peripheral stalk. During catalysis, ATP synthesis in the catalytic domain of F(1) is coupled via a rotary mechanism of the central stalk subunits to proton translocation. This protein is part of the stalk that links CF(0) to CF(1). It either transmits conformational changes from CF(0) to CF(1) or is implicated in proton conduction. The chain is ATP synthase subunit delta from Alkalilimnicola ehrlichii (strain ATCC BAA-1101 / DSM 17681 / MLHE-1).